The primary structure comprises 426 residues: Glutamyl-tRNA reductase (426 aa).

Substrate is bound by residues 49-52 (TCNR), Ser-110, 115-117 (EAQ), and Gln-121. Residue Cys-50 is the Nucleophile of the active site. 191–196 (GAGEMA) lines the NADP(+) pocket.

The protein belongs to the glutamyl-tRNA reductase family. Homodimer.

It catalyses the reaction (S)-4-amino-5-oxopentanoate + tRNA(Glu) + NADP(+) = L-glutamyl-tRNA(Glu) + NADPH + H(+). It functions in the pathway porphyrin-containing compound metabolism; protoporphyrin-IX biosynthesis; 5-aminolevulinate from L-glutamyl-tRNA(Glu): step 1/2. Functionally, catalyzes the NADPH-dependent reduction of glutamyl-tRNA(Glu) to glutamate 1-semialdehyde (GSA). The sequence is that of Glutamyl-tRNA reductase from Rhodopirellula baltica (strain DSM 10527 / NCIMB 13988 / SH1).